Consider the following 341-residue polypeptide: DNA-directed RNA polymerase subunit alpha (341 aa).

The alpha N-terminal domain (alpha-NTD) stretch occupies residues 1–233; that stretch reads MVREEVPVST…DLFIPFLHAE (233 aa). Residues 266–341 form an alpha C-terminal domain (alpha-CTD) region; sequence IILKRIFIDQ…LKNSNQFESR (76 aa).

It belongs to the RNA polymerase alpha chain family. In plastids the minimal PEP RNA polymerase catalytic core is composed of four subunits: alpha, beta, beta', and beta''. When a (nuclear-encoded) sigma factor is associated with the core the holoenzyme is formed, which can initiate transcription.

It localises to the plastid. It is found in the chloroplast. The enzyme catalyses RNA(n) + a ribonucleoside 5'-triphosphate = RNA(n+1) + diphosphate. In terms of biological role, DNA-dependent RNA polymerase catalyzes the transcription of DNA into RNA using the four ribonucleoside triphosphates as substrates. This is DNA-directed RNA polymerase subunit alpha from Nymphaea alba (White water-lily).